Here is a 348-residue protein sequence, read N- to C-terminus: L-threonine 3-dehydrogenase (348 aa).

C42 contacts Zn(2+). Residues T44 and H47 each act as charge relay system in the active site. Positions 67, 68, 97, 100, 103, and 111 each coordinate Zn(2+). Residues L179, E199, R204, 266 to 268 (LGL), and 291 to 292 (IT) each bind NAD(+).

Belongs to the zinc-containing alcohol dehydrogenase family. As to quaternary structure, homodimer. Homotetramer; dimer of dimers. Zn(2+) serves as cofactor.

The protein resides in the cytoplasm. It catalyses the reaction L-threonine + NAD(+) = (2S)-2-amino-3-oxobutanoate + NADH + H(+). The protein operates within amino-acid degradation; L-threonine degradation via oxydo-reductase pathway; glycine from L-threonine: step 1/2. Is totally inhibited by EDTA in vitro. Catalyzes the NAD(+)-dependent oxidation of L-threonine to 2-amino-3-ketobutyrate. Is much less efficient when using NADP(+) instead of NAD(+). To a lesser extent, also catalyzes the oxidation of L-serine and DL-threo-3-phenylserine, but not that of L-allo-threonine, D-threonine and D-allo-threonine and many other L-amino acids. This is L-threonine 3-dehydrogenase from Pyrococcus horikoshii (strain ATCC 700860 / DSM 12428 / JCM 9974 / NBRC 100139 / OT-3).